The sequence spans 365 residues: Homeobox protein knotted-1-like 7 (365 aa).

Basic and acidic residues predominate over residues 1 to 11 (MEELEGHRGEG). The interval 1–20 (MEELEGHRGEGRLPPPPPLL) is disordered. Positions 227 to 247 (ALKRHLLRKYSGYLGGLRKEL) constitute an ELK domain. The homeobox; TALE-type DNA-binding region spans 248–311 (SKKRKKGKLP…NQRKRHWKPT (64 aa)).

Belongs to the TALE/KNOX homeobox family.

It localises to the nucleus. In terms of biological role, probable transcription factor that may be involved in shoot formation during embryogenesis. This chain is Homeobox protein knotted-1-like 7 (OSH3), found in Oryza sativa subsp. japonica (Rice).